The primary structure comprises 377 residues: Leukocyte elastase inhibitor (377 aa).

M1 carries the post-translational modification N-acetylmethionine.

It belongs to the serpin family. Ov-serpin subfamily.

It localises to the cytoplasm. In terms of biological role, regulates the activity of the neutrophil proteases. The sequence is that of Leukocyte elastase inhibitor (serpinb1) from Xenopus tropicalis (Western clawed frog).